The chain runs to 216 residues: Probable ubiquitin-conjugating enzyme E2 ECU01_1010 (216 aa).

The span at 1–10 (MFKPSAHRRL) shows a compositional bias: basic residues. Residues 1–29 (MFKPSAHRRLPREDDIIQEDDEDGPLWPS) are disordered. A UBC core domain is found at 29 to 196 (SALRRLSNEE…VIRIAREEDE (168 aa)). Cysteine 120 serves as the catalytic Glycyl thioester intermediate.

The protein belongs to the ubiquitin-conjugating enzyme family.

The enzyme catalyses S-ubiquitinyl-[E1 ubiquitin-activating enzyme]-L-cysteine + [E2 ubiquitin-conjugating enzyme]-L-cysteine = [E1 ubiquitin-activating enzyme]-L-cysteine + S-ubiquitinyl-[E2 ubiquitin-conjugating enzyme]-L-cysteine.. The protein operates within protein modification; protein ubiquitination. Its function is as follows. Catalyzes the covalent attachment of ubiquitin to other proteins so as to signal them for selective protein degradation. Involved in the formation of multiubiquitin chains. The sequence is that of Probable ubiquitin-conjugating enzyme E2 ECU01_1010 from Encephalitozoon cuniculi (strain GB-M1) (Microsporidian parasite).